A 190-amino-acid polypeptide reads, in one-letter code: Peptidyl-tRNA hydrolase (190 aa).

Tyrosine 18 serves as a coordination point for tRNA. Histidine 23 acts as the Proton acceptor in catalysis. TRNA contacts are provided by tyrosine 69, asparagine 71, and asparagine 117.

The protein belongs to the PTH family. As to quaternary structure, monomer.

Its subcellular location is the cytoplasm. The catalysed reaction is an N-acyl-L-alpha-aminoacyl-tRNA + H2O = an N-acyl-L-amino acid + a tRNA + H(+). Hydrolyzes ribosome-free peptidyl-tRNAs (with 1 or more amino acids incorporated), which drop off the ribosome during protein synthesis, or as a result of ribosome stalling. Its function is as follows. Catalyzes the release of premature peptidyl moieties from peptidyl-tRNA molecules trapped in stalled 50S ribosomal subunits, and thus maintains levels of free tRNAs and 50S ribosomes. This is Peptidyl-tRNA hydrolase from Rhodococcus erythropolis (strain PR4 / NBRC 100887).